A 377-amino-acid chain; its full sequence is NIF3-like protein 1 (377 aa).

Lys-109 carries the N6-acetyllysine modification. The mediates interaction with COPS2 stretch occupies residues 244–377 (LLLHTGMGRL…ETDRDPLQVV (134 aa)). The residue at position 255 (Thr-255) is a Phosphothreonine. Ser-259 carries the post-translational modification Phosphoserine.

Belongs to the GTP cyclohydrolase I type 2/NIF3 family. In terms of assembly, homodimer. Interacts with COPS2. Interacts with THOC7.

The protein localises to the cytoplasm. It is found in the nucleus. May function as a transcriptional corepressor through its interaction with COPS2, negatively regulating the expression of genes involved in neuronal differentiation. The protein is NIF3-like protein 1 of Homo sapiens (Human).